We begin with the raw amino-acid sequence, 460 residues long: Serine--tRNA ligase (460 aa).

Basic and acidic residues predominate over residues 50 to 65 (DRNEVSSKIGELKQAG). Disordered regions lie at residues 50–71 (DRNEVSSKIGELKQAGDEDAAQ) and 109–129 (PDEDAPVGDSEAENVERRREG). Positions 109–121 (PDEDAPVGDSEAE) are enriched in acidic residues. 241–243 (TAE) is a binding site for L-serine. ATP-binding positions include 272–274 (RRE) and Val288. L-serine is bound at residue Glu295. Residue 368–371 (EVSS) coordinates ATP. Position 404 (Ser404) interacts with L-serine.

The protein belongs to the class-II aminoacyl-tRNA synthetase family. Type-1 seryl-tRNA synthetase subfamily. As to quaternary structure, homodimer. The tRNA molecule binds across the dimer.

It localises to the cytoplasm. The enzyme catalyses tRNA(Ser) + L-serine + ATP = L-seryl-tRNA(Ser) + AMP + diphosphate + H(+). It catalyses the reaction tRNA(Sec) + L-serine + ATP = L-seryl-tRNA(Sec) + AMP + diphosphate + H(+). The protein operates within aminoacyl-tRNA biosynthesis; selenocysteinyl-tRNA(Sec) biosynthesis; L-seryl-tRNA(Sec) from L-serine and tRNA(Sec): step 1/1. In terms of biological role, catalyzes the attachment of serine to tRNA(Ser). Is also able to aminoacylate tRNA(Sec) with serine, to form the misacylated tRNA L-seryl-tRNA(Sec), which will be further converted into selenocysteinyl-tRNA(Sec). The polypeptide is Serine--tRNA ligase (Halobacterium salinarum (strain ATCC 29341 / DSM 671 / R1)).